The primary structure comprises 317 residues: Phospho-N-acetylmuramoyl-pentapeptide-transferase (317 aa).

Transmembrane regions (helical) follow at residues 6–26 (IVMA…IIIP), 52–72 (PTIG…IMVG), 78–98 (AMIA…DDLL), 114–134 (MILL…YIGT), 145–165 (INFG…VTNA), 171–191 (GLDG…GIIS), 194–214 (LGHI…LAFL), 223–244 (VFMG…ALIL), and 297–317 (KIVS…FASL).

The protein belongs to the glycosyltransferase 4 family. MraY subfamily. Requires Mg(2+) as cofactor.

It is found in the cell membrane. The catalysed reaction is UDP-N-acetyl-alpha-D-muramoyl-L-alanyl-gamma-D-glutamyl-meso-2,6-diaminopimeloyl-D-alanyl-D-alanine + di-trans,octa-cis-undecaprenyl phosphate = di-trans,octa-cis-undecaprenyl diphospho-N-acetyl-alpha-D-muramoyl-L-alanyl-D-glutamyl-meso-2,6-diaminopimeloyl-D-alanyl-D-alanine + UMP. The protein operates within cell wall biogenesis; peptidoglycan biosynthesis. Catalyzes the initial step of the lipid cycle reactions in the biosynthesis of the cell wall peptidoglycan: transfers peptidoglycan precursor phospho-MurNAc-pentapeptide from UDP-MurNAc-pentapeptide onto the lipid carrier undecaprenyl phosphate, yielding undecaprenyl-pyrophosphoryl-MurNAc-pentapeptide, known as lipid I. This is Phospho-N-acetylmuramoyl-pentapeptide-transferase from Clostridium perfringens (strain 13 / Type A).